Reading from the N-terminus, the 274-residue chain is MEIRKRILADMQVAETIDAHEEIRKSVEFLKAYLKKNTFLKSFVLGISGGQDSTLTGKLAQLAISEMRDETGDNEYQFFAVSLPYGTQLDESDRQDALNFMNPDNRLTVNIKASVDASVAALAEAGVELSDFAKGNEKARERMKVQYAIAAMHKGVVVGTDHSAEAVTGFYTKYGDGGTDINPLFRLNKRQGKALLKELGCPEHLYLKKPTADLEDNKPALPDEVALGVTYDQIDDYLEGKEVPADAAAKIENWFIKTEHKRHMAITIFDDFWK.

Residue 46-53 participates in ATP binding; it reads GISGGQDS. D52 provides a ligand contact to Mg(2+). A deamido-NAD(+)-binding site is contributed by R140. T160 is an ATP binding site. E165 serves as a coordination point for Mg(2+). Deamido-NAD(+) contacts are provided by K173 and D180. The ATP site is built by K189 and T211. Residue 260 to 261 coordinates deamido-NAD(+); it reads HK.

It belongs to the NAD synthetase family. Homodimer.

The enzyme catalyses deamido-NAD(+) + NH4(+) + ATP = AMP + diphosphate + NAD(+) + H(+). Its pathway is cofactor biosynthesis; NAD(+) biosynthesis; NAD(+) from deamido-NAD(+) (ammonia route): step 1/1. Functionally, catalyzes the ATP-dependent amidation of deamido-NAD to form NAD. Uses ammonia as a nitrogen source. The polypeptide is NH(3)-dependent NAD(+) synthetase (Listeria welshimeri serovar 6b (strain ATCC 35897 / DSM 20650 / CCUG 15529 / CIP 8149 / NCTC 11857 / SLCC 5334 / V8)).